We begin with the raw amino-acid sequence, 333 residues long: L-lactate dehydrogenase B chain (333 aa).

NAD(+) is bound by residues 29–57 and Arg-99; that span reads GQVG…WEDK. Substrate is bound by residues Arg-106, Asn-138, and Arg-169. Asn-138 is an NAD(+) binding site. Residue His-193 is the Proton acceptor of the active site. Residue Thr-248 participates in substrate binding.

It belongs to the LDH/MDH superfamily. LDH family. In terms of assembly, homotetramer.

The protein localises to the cytoplasm. The enzyme catalyses (S)-lactate + NAD(+) = pyruvate + NADH + H(+). It functions in the pathway fermentation; pyruvate fermentation to lactate; (S)-lactate from pyruvate: step 1/1. In terms of biological role, interconverts simultaneously and stereospecifically pyruvate and lactate with concomitant interconversion of NADH and NAD(+). This is L-lactate dehydrogenase B chain (LDHB) from Alligator mississippiensis (American alligator).